We begin with the raw amino-acid sequence, 548 residues long: Thermostable neutral protease NprT (548 aa).

An N-terminal signal peptide occupies residues 1-25; it reads MNKRAMLGAIGLAFGLLAAPIGASA. Positions 26–229 are cleaved as a propeptide — activation peptide; that stretch reads KGESIVWNEQ…DSRQPGGGQP (204 aa). Ca(2+) is bound by residues Asp-289, Asp-291, Gln-293, and Asp-370. Position 374 (His-374) interacts with Zn(2+). Residue Glu-375 is part of the active site. 2 residues coordinate Zn(2+): His-378 and Glu-398. Ca(2+)-binding residues include Glu-409, Asn-415, Asp-417, Glu-419, Glu-422, Tyr-425, Thr-426, Val-429, and Asp-432. The active-site Proton donor is His-463.

This sequence belongs to the peptidase M4 family. The cofactor is Ca(2+). It depends on Zn(2+) as a cofactor.

The protein localises to the secreted. With respect to regulation, its casein hydrolytic activity is inhibited almost completely by a chelating agent (EDTA), whereas neither diisopropyl fluorophosphate nor phenylmethylsulfonyl fluoride inhibit the proteolytic activity in vitro. Functionally, extracellular zinc metalloprotease. The chain is Thermostable neutral protease NprT (nprT) from Geobacillus stearothermophilus (Bacillus stearothermophilus).